A 663-amino-acid polypeptide reads, in one-letter code: Polyunsaturated fatty acid lipoxygenase ALOX12 (663 aa).

The region spanning 2 to 114 (GRYRIRVATG…ILSLPEGTAR (113 aa)) is the PLAT domain. Positions 115–663 (LPGDNALDMF…PSCIENSVTI (549 aa)) constitute a Lipoxygenase domain. Residue Ser-246 is modified to Phosphoserine. Residues His-360, His-365, His-540, Asn-544, and Ile-663 each coordinate Fe cation.

Belongs to the lipoxygenase family. Requires Fe cation as cofactor. As to expression, expressed in vascular smooth muscle cells.

It is found in the cytoplasm. It localises to the cytosol. Its subcellular location is the membrane. It carries out the reaction (5Z,8Z,11Z,14Z)-eicosatetraenoate + O2 = (12S)-hydroperoxy-(5Z,8Z,10E,14Z)-eicosatetraenoate. It catalyses the reaction (5Z,8Z,11Z,14Z)-eicosatetraenoate + O2 = (15S)-hydroperoxy-(5Z,8Z,11Z,13E)-eicosatetraenoate. The catalysed reaction is 2 leukotriene A4 + O2 + 2 H2O = 2 lipoxin A4. The enzyme catalyses 2 leukotriene A4 + O2 + 2 H2O = 2 lipoxin B4. It carries out the reaction (14S)-hydroperoxy-(4Z,7Z,10Z,12E,16Z,19Z)-docosahexaenoate = (13S,14S)-epoxy-(4Z,7Z,9E,11E,16Z,19Z)-docosahexaenoate + H2O. It catalyses the reaction N-(5Z,8Z,11Z,14Z)-eicosatetraenoyl-L-alanine + O2 = N-(15S)-hydroperoxy-(5Z,8Z,11Z,13E)-eicosatetraenoyl-alanine. The catalysed reaction is N-(5Z,8Z,11Z,14Z)-eicosatetraenoyl-L-alanine + O2 = N-(12S)-hydroperoxy-(5Z,8Z,10E,14Z)-eicosatetraenoyl-alanine. The enzyme catalyses N-(5Z,8Z,11Z,14Z)-eicosatetraenoyl-gamma-aminobutanoate + O2 = N-(15S)-hydroperoxy-(5Z,8Z,11Z,13E)-eicosatetraenoyl-gamma-aminobutanoate. It carries out the reaction N-(5Z,8Z,11Z,14Z)-eicosatetraenoyl-gamma-aminobutanoate + O2 = N-(12S)-hydroperoxy-(5Z,8Z,10E,14Z)-eicosatetraenoyl-gamma-aminobutanoate. It catalyses the reaction N-(5Z,8Z,11Z,14Z)-eicosatetraenoyl-glycine + O2 = N-(15S)-hydroperoxy-(5Z,8Z,11Z,13E)-eicosatetraenoyl-glycine. The catalysed reaction is N-(5Z,8Z,11Z,14Z)-eicosatetraenoyl-glycine + O2 = N-(12S)-hydroperoxy-(5Z,8Z,10E,14Z)-eicosatetraenoyl-glycine. The enzyme catalyses N-(5Z,8Z,11Z,14Z)-eicosatetraenoyl-taurine + O2 = N-(12S)-hydroperoxy-(5Z,8Z,10E,14Z)-eicosatetraenoyl-taurine. It carries out the reaction N-(5Z,8Z,11Z,14Z)-eicosatetraenoyl-taurine + O2 = N-(15S)-hydroperoxy-(5Z,8Z,11Z,13E)-eicosatetraenoyl-taurine. It catalyses the reaction (4Z,7Z,10Z,13Z,16Z,19Z)-docosahexaenoate + O2 = (14S)-hydroperoxy-(4Z,7Z,10Z,12E,16Z,19Z)-docosahexaenoate. The catalysed reaction is (7S)-hydroperoxy-(4Z,8E,10Z,13Z,16Z,19Z)-docosahexaenoate + O2 = (7S,14S)-dihydroperoxy-(4Z,8E,10Z,12E,16Z,19Z)-docosahexaenoate. The enzyme catalyses (7S)-hydroperoxy-(4Z,8E,10Z,13Z,16Z,19Z)-docosahexaenoate + O2 = (7S,17S)-dihydroperoxy-(4Z,8E,10Z,13Z,15E,19Z)-docosahexaenoate. It carries out the reaction (5Z,8Z,11Z,14Z,17Z)-eicosapentaenoate + O2 = (12S)-hydroperoxy-(5Z,8Z,10E,14Z,17Z)-eicosapentaenoate. It catalyses the reaction (8Z,11Z,14Z)-eicosatrienoate + O2 = (12S)-hydroperoxy-(8Z,10E,14Z)-eicosatrienoate. The catalysed reaction is (9Z,12Z)-octadecadienoate + O2 = (13S)-hydroperoxy-(9Z,11E)-octadecadienoate. The enzyme catalyses (5Z,8Z,11Z)-eicosatrienoate + O2 = (12S)-hydroperoxy-(5Z,8Z,10E)-eicosatrienoate. It carries out the reaction (14R,15S)-epoxy-(5Z,8Z,11Z)-eicosatrienoate + O2 = (12S)-hydroperoxy-(14R,15S)-epoxy-(5Z,8Z,10E)-eicosatrienoate. It catalyses the reaction (14S,15R)-epoxy-(5Z,8Z,11Z)-eicosatrienoate + O2 = (12S)-hydroperoxy-(14S,15R)-epoxy-(5Z,8Z,10E)-eicosatrienoate. Its pathway is lipid metabolism; hydroperoxy eicosatetraenoic acid biosynthesis. Its activity is regulated as follows. Activated by EGF. Arachidonic acid conversion is inhibited by (13S,14S)-epoxy-(4Z,7Z,9E,11E,16Z,19Z)-docosahexaenoate (13S,14S-epoxy-DHA). Arachidonate 12-lipoxygenase activity is decreased when PH decreases from 7.4 to 6. Catalyzes the regio and stereo-specific incorporation of molecular oxygen into free and esterified polyunsaturated fatty acids generating lipid hydroperoxides that can be further reduced to the corresponding hydroxy species. Mainly converts arachidonate ((5Z,8Z,11Z,14Z)-eicosatetraenoate) to the specific bioactive lipid (12S)-hydroperoxyeicosatetraenoate/(12S)-HPETE. Through the production of bioactive lipids like (12S)-HPETE it regulates different biological processes including platelet activation. It can also catalyze the epoxidation of double bonds of polyunsaturated fatty acids such as (14S)-hydroperoxy-docosahexaenoate/(14S)-HPDHA resulting in the formation of (13S,14S)-epoxy-DHA. Furthermore, it may participate in the sequential oxidations of DHA ((4Z,7Z,10Z,13Z,16Z,19Z)-docosahexaenoate) to generate specialized pro-resolving mediators (SPMs) like resolvin D5 ((7S,17S)-diHPDHA) and (7S,14S)-diHPDHA, that actively down-regulate the immune response and have anti-aggregation properties with platelets. An additional function involves a multistep process by which it transforms leukotriene A4/LTA4 into the bioactive lipids lipoxin A4/LXA4 and lipoxin B4/LXB4, both are vasoactive and LXA4 may regulate neutrophil function via occupancy of specific recognition sites. Can also peroxidize linoleate ((9Z,12Z)-octadecadienoate) to (13S)-hydroperoxyoctadecadienoate/ (13S-HPODE). Due to its role in regulating both the expression of the vascular endothelial growth factor (VEGF, an angiogenic factor involved in the survival and metastasis of solid tumors) and the expression of integrin beta-1 (known to affect tumor cell migration and proliferation), it can be regarded as protumorigenic. Important for cell survival, as it may play a role not only in proliferation but also in the prevention of apoptosis in vascular smooth muscle cells. This chain is Polyunsaturated fatty acid lipoxygenase ALOX12, found in Homo sapiens (Human).